A 107-amino-acid polypeptide reads, in one-letter code: MSITMSDSAAQRVQAFMNNRGKGLGLRLGVRTSGCSGMAYVLEFVDDMNDDDIVFENKGVKVIIDGKSLVYLDGTELDFVKEGLNEGFKFNNPNVSSECGCGESFNV.

3 residues coordinate Fe cation: cysteine 35, cysteine 99, and cysteine 101.

The protein belongs to the HesB/IscA family. Homodimer; may form tetramers and higher multimers. Fe cation serves as cofactor.

In terms of biological role, is able to transfer iron-sulfur clusters to apo-ferredoxin. Multiple cycles of [2Fe2S] cluster formation and transfer are observed, suggesting that IscA acts catalytically. Recruits intracellular free iron so as to provide iron for the assembly of transient iron-sulfur cluster in IscU in the presence of IscS, L-cysteine and the thioredoxin reductase system TrxA/TrxB. This is Iron-binding protein IscA from Serratia proteamaculans (strain 568).